A 395-amino-acid polypeptide reads, in one-letter code: uncharacterized protein (395 aa).

The next 10 membrane-spanning stretches (helical) occupy residues 19 to 39 (IGIA…IAII), 49 to 69 (VLLI…IYEL), 87 to 107 (LTWI…AVGG), 137 to 157 (LVII…PLGT), 172 to 192 (YINL…FYLI), 206 to 226 (TINI…SLIA), 252 to 272 (LIGG…MGMG), 279 to 299 (LFIM…KILA), 311 to 331 (GLVF…GSLI), and 359 to 379 (VLCT…GAVI).

It belongs to the chloride channel (TC 2.A.49) family.

It localises to the cell membrane. This is an uncharacterized protein from Methanocaldococcus jannaschii (strain ATCC 43067 / DSM 2661 / JAL-1 / JCM 10045 / NBRC 100440) (Methanococcus jannaschii).